Reading from the N-terminus, the 473-residue chain is Photosystem II CP43 reaction center protein (473 aa).

The propeptide occupies 1–14 (MKTLYSLRRFYHVE). T15 bears the N-acetylthreonine mark. Position 15 is a phosphothreonine (T15). The next 5 helical transmembrane spans lie at 69 to 93 (LFEV…PHLA), 134 to 155 (LLGP…KDRN), 178 to 200 (KALY…RKIA), 255 to 275 (KPFA…LSYS), and 291 to 312 (WFNN…ASQA). E367 is a [CaMn4O5] cluster binding site. A helical transmembrane segment spans residues 447-471 (RARAAAAGFEKGIDRDFEPVLSMTP).

The protein belongs to the PsbB/PsbC family. PsbC subfamily. As to quaternary structure, PSII is composed of 1 copy each of membrane proteins PsbA, PsbB, PsbC, PsbD, PsbE, PsbF, PsbH, PsbI, PsbJ, PsbK, PsbL, PsbM, PsbT, PsbX, PsbY, PsbZ, Psb30/Ycf12, at least 3 peripheral proteins of the oxygen-evolving complex and a large number of cofactors. It forms dimeric complexes. It depends on Binds multiple chlorophylls and provides some of the ligands for the Ca-4Mn-5O cluster of the oxygen-evolving complex. It may also provide a ligand for a Cl- that is required for oxygen evolution. PSII binds additional chlorophylls, carotenoids and specific lipids. as a cofactor.

The protein resides in the plastid membrane. Its function is as follows. One of the components of the core complex of photosystem II (PSII). It binds chlorophyll and helps catalyze the primary light-induced photochemical processes of PSII. PSII is a light-driven water:plastoquinone oxidoreductase, using light energy to abstract electrons from H(2)O, generating O(2) and a proton gradient subsequently used for ATP formation. The sequence is that of Photosystem II CP43 reaction center protein from Cuscuta exaltata (Tall dodder).